Consider the following 914-residue polypeptide: Eukaryotic initiation factor 4F subunit p130 (914 aa).

Residues 1–12 (MTDQRGPPPPHP) show a composition bias toward pro residues. Disordered regions lie at residues 1–84 (MTDQ…YNNR), 128–205 (PPYT…NEAV), 240–351 (ERKK…VNKS), and 457–535 (IARN…LVPS). A compositionally biased stretch (polar residues) spans 26–44 (NQYSGANNSQPNNHYNENL). Over residues 59-73 (KNGKYGTNKYNNRNN) the composition is skewed to low complexity. Ser-74 carries the phosphoserine modification. Residues 145–155 (PKTTKIEITTK) show a composition bias toward low complexity. Basic and acidic residues predominate over residues 156–195 (TGERLNLKKFHEEKKASKGEEKNDGVEQKSKSGTPFEKEA). Position 196 is a phosphothreonine (Thr-196). The interaction with PAB1 stretch occupies residues 201–315 (ANEAVKDTLT…TGSVTKSVTF (115 aa)). Over residues 240 to 263 (ERKKNGLISETEKKQETSNHDNTD) the composition is skewed to basic and acidic residues. Composition is skewed to polar residues over residues 298–325 (SVKT…SSSQ) and 339–348 (ISDTTGGKTV). At Thr-301 the chain carries Phosphothreonine. Over residues 496–529 (RMGDDRRSNRGYTSRKDREKAAEKAEEQAPKEEI) the composition is skewed to basic and acidic residues. Phosphoserine is present on Ser-503. The 244-residue stretch at 567-810 (ERKMKSLLNK…IDVKELREIK (244 aa)) folds into the MIF4G domain. Residues 833-914 (QLRQKKNSQR…ALMNNDGDSD (82 aa)) form a disordered region. Positions 841–867 (QRSNSRFNNHNQSNSNRYSSNRRNMQN) are enriched in low complexity. A compositionally biased stretch (polar residues) spans 868-886 (TQRDSFASTKTGSFRNNQR). Ser-913 carries the post-translational modification Phosphoserine.

This sequence belongs to the eukaryotic initiation factor 4G family. In terms of assembly, component of the eIF4F complex, which composition varies with external and internal environmental conditions. It is composed of at least eIF4A (TIF1/TIF2), eIF4E (TIF45) and eIF4G (TIF4631 or TIF4632). Interacts with PAT1 in a RNA-dependent manner.

It localises to the cytoplasm. In terms of biological role, component of the eIF4F complex, which interacts with the mRNA cap structure and serves as an initial point of assembly for the translation apparatus. Stimulates translation by interaction with polyadenylate-binding protein PAB1, bringing the 5'- and 3'-ends of the mRNA in proximity. The formation of this circular mRNP structure appears to be critical for the synergistic effects of the cap and the poly(A) tail in facilitating translation initiation, recycling of ribosomes, and mRNA stability. TIF4632 is probably essential when TIF4631 is missing. This Saccharomyces cerevisiae (strain ATCC 204508 / S288c) (Baker's yeast) protein is Eukaryotic initiation factor 4F subunit p130.